A 119-amino-acid polypeptide reads, in one-letter code: Spermidine export protein MdtJ (119 aa).

4 helical membrane-spanning segments follow: residues 1–21 (MIYWILLALAIVSEITGTLAL), 31–51 (AGFILMLVMISLSYILLSFSV), 54–74 (IALGVAYALWEGVGIVLITLF), and 81–101 (ETLTVQKALGLLVLIAGILLI).

The protein belongs to the drug/metabolite transporter (DMT) superfamily. Small multidrug resistance (SMR) (TC 2.A.7.1) family. MdtJ subfamily. Forms a complex with MdtI.

Its subcellular location is the cell inner membrane. Catalyzes the excretion of spermidine. The chain is Spermidine export protein MdtJ (mdtJ) from Cronobacter sakazakii (strain ATCC BAA-894) (Enterobacter sakazakii).